The sequence spans 181 residues: Protein TrbB (181 aa).

An N-terminal signal peptide occupies residues 1–22; that stretch reads MSLTKSLLFTLLLSAAAVQAST. The 136-residue stretch at 37–172 folds into the Thioredoxin domain; it reads TQPAQPAAGT…FMARVDTVLQ (136 aa).

It localises to the periplasm. The sequence is that of Protein TrbB (trbB) from Escherichia coli (strain K12).